A 212-amino-acid polypeptide reads, in one-letter code: Prolactin (212 aa).

The N-terminal stretch at 1–24 (MAQRKTNGSKLFMMVLYMVAACSA) is a signal peptide. Cystine bridges form between Cys-70–Cys-185 and Cys-202–Cys-212.

Belongs to the somatotropin/prolactin family. Pituitary gland.

Its subcellular location is the secreted. The chain is Prolactin (prl) from Dicentrarchus labrax (European seabass).